We begin with the raw amino-acid sequence, 406 residues long: N-acetylmuramoyl-L-alanine amidase CwlM (406 aa).

2 peptidoglycan-binding domain regions span residues 18-83 and 105-160; these read SAAV…YRAL and GDDV…LRSL. The 178-residue stretch at 193–370 folds into the MurNAc-LAA domain; the sequence is IIIDPGRGGV…IAEGILAAVK (178 aa).

Belongs to the N-acetylmuramoyl-L-alanine amidase 3 family.

It is found in the periplasm. It catalyses the reaction Hydrolyzes the link between N-acetylmuramoyl residues and L-amino acid residues in certain cell-wall glycopeptides.. The protein operates within cell wall degradation; peptidoglycan degradation. Functionally, cell-wall hydrolase that hydrolyzes the amide bond between N-acetylmuramic acid and L-alanine in cell-wall glycopeptides. Is able to lyse whole mycobacteria, release peptidoglycan from the cell wall of M.luteus and M.smegmatis, and cleave N-acetylmuramoyl-L-alanyl-D-isoglutamine, releasing free N-acetylmuramic acid and dipeptide. In Mycobacterium tuberculosis (strain ATCC 25618 / H37Rv), this protein is N-acetylmuramoyl-L-alanine amidase CwlM.